Here is a 286-residue protein sequence, read N- to C-terminus: Phosphatidylserine decarboxylase proenzyme (286 aa).

Catalysis depends on charge relay system; for autoendoproteolytic cleavage activity residues D90, H147, and S253. S253 (schiff-base intermediate with substrate; via pyruvic acid; for decarboxylase activity) is an active-site residue. S253 is modified (pyruvic acid (Ser); by autocatalysis).

This sequence belongs to the phosphatidylserine decarboxylase family. PSD-B subfamily. Prokaryotic type I sub-subfamily. In terms of assembly, heterodimer of a large membrane-associated beta subunit and a small pyruvoyl-containing alpha subunit. Pyruvate is required as a cofactor. In terms of processing, is synthesized initially as an inactive proenzyme. Formation of the active enzyme involves a self-maturation process in which the active site pyruvoyl group is generated from an internal serine residue via an autocatalytic post-translational modification. Two non-identical subunits are generated from the proenzyme in this reaction, and the pyruvate is formed at the N-terminus of the alpha chain, which is derived from the carboxyl end of the proenzyme. The autoendoproteolytic cleavage occurs by a canonical serine protease mechanism, in which the side chain hydroxyl group of the serine supplies its oxygen atom to form the C-terminus of the beta chain, while the remainder of the serine residue undergoes an oxidative deamination to produce ammonia and the pyruvoyl prosthetic group on the alpha chain. During this reaction, the Ser that is part of the protease active site of the proenzyme becomes the pyruvoyl prosthetic group, which constitutes an essential element of the active site of the mature decarboxylase.

It localises to the cell membrane. The enzyme catalyses a 1,2-diacyl-sn-glycero-3-phospho-L-serine + H(+) = a 1,2-diacyl-sn-glycero-3-phosphoethanolamine + CO2. It participates in phospholipid metabolism; phosphatidylethanolamine biosynthesis; phosphatidylethanolamine from CDP-diacylglycerol: step 2/2. Catalyzes the formation of phosphatidylethanolamine (PtdEtn) from phosphatidylserine (PtdSer). This chain is Phosphatidylserine decarboxylase proenzyme, found in Pseudoalteromonas atlantica (strain T6c / ATCC BAA-1087).